We begin with the raw amino-acid sequence, 285 residues long: Bifunctional protein FolD (285 aa).

NADP(+) contacts are provided by residues G166 to S168 and I232.

Belongs to the tetrahydrofolate dehydrogenase/cyclohydrolase family. Homodimer.

It carries out the reaction (6R)-5,10-methylene-5,6,7,8-tetrahydrofolate + NADP(+) = (6R)-5,10-methenyltetrahydrofolate + NADPH. The enzyme catalyses (6R)-5,10-methenyltetrahydrofolate + H2O = (6R)-10-formyltetrahydrofolate + H(+). It functions in the pathway one-carbon metabolism; tetrahydrofolate interconversion. Catalyzes the oxidation of 5,10-methylenetetrahydrofolate to 5,10-methenyltetrahydrofolate and then the hydrolysis of 5,10-methenyltetrahydrofolate to 10-formyltetrahydrofolate. The polypeptide is Bifunctional protein FolD (Aliivibrio salmonicida (strain LFI1238) (Vibrio salmonicida (strain LFI1238))).